A 373-amino-acid polypeptide reads, in one-letter code: Ferroptosis suppressor protein 1 (373 aa).

G2 carries N-myristoyl glycine lipidation. A helical transmembrane segment spans residues V13–L29. Residues G17–G21, R53, and V81 contribute to the 6-hydroxy-FAD site. Residue K167 is modified to N6-acetyllysine. D284 serves as a coordination point for 6-hydroxy-FAD.

It belongs to the FAD-dependent oxidoreductase family. 6-hydroxy-FAD is required as a cofactor. Post-translationally, N-myristoylation at Gly-2 mediates the recruitment to lipid droplets and plasma membrane. Acetylation at Lys-167 prevents AIFM2 ubiquitination and degradation, thereby inhibiting ferroptosis. KAT2B mediates acetylation at Lys-167, while HDAC3 removes it. In terms of processing, ubiquitinated. AIFM2 undergoes 'Lys-29'-ubiquitination and proteasomal degradation, which is inhibited by acetylation at Lys-167.

It localises to the lipid droplet. The protein localises to the cell membrane. The protein resides in the cytoplasm. Its subcellular location is the mitochondrion membrane. It is found in the nucleus. It catalyses the reaction ubiquinone-10 + NADH + H(+) = ubiquinol-10 + NAD(+). It carries out the reaction phylloquinone + NADH + H(+) = phylloquinol + NAD(+). The catalysed reaction is menaquinone-4 + NADH + H(+) = menaquinol-4 + NAD(+). The enzyme catalyses menadione + NADH + H(+) = menadiol + NAD(+). Its activity is regulated as follows. The modification by 4-hydroxy-2-nonenal (HNE) adduction in mitochondria results in loss of the oxidoreductase activity and activation of a novel function in mitochondrial oxidative stress signaling. In terms of biological role, a NAD(P)H-dependent oxidoreductase that acts as a key inhibitor of ferroptosis. At the plasma membrane, catalyzes reduction of coenzyme Q/ubiquinone-10 to ubiquinol-10, a lipophilic radical-trapping antioxidant that prevents lipid oxidative damage and consequently ferroptosis. Acts in parallel to GPX4 to suppress phospholipid peroxidation and ferroptosis. This anti-ferroptotic function is independent of cellular glutathione levels. Also acts as a potent radical-trapping antioxidant by mediating warfarin-resistant vitamin K reduction in the canonical vitamin K cycle: catalyzes NAD(P)H-dependent reduction of vitamin K (phylloquinone, menaquinone-4 and menadione) to hydroquinone forms. Hydroquinones act as potent radical-trapping antioxidants inhibitor of phospholipid peroxidation and ferroptosis. May play a role in mitochondrial stress signaling. Upon oxidative stress, associates with the lipid peroxidation end product 4-hydroxy-2-nonenal (HNE) forming a lipid adduct devoid of oxidoreductase activity, which then translocates from mitochondria into the nucleus triggering DNA damage and cell death. The chain is Ferroptosis suppressor protein 1 (AIFM2) from Taeniopygia guttata (Zebra finch).